The following is a 129-amino-acid chain: LEM domain-containing protein 1 (129 aa).

In terms of domain architecture, LEM spans 1 to 45 (MVDVKCLSDYELHKHLMKLGFTPGPILPSTRKTYEKKLVQLLASP). The segment at 45–129 (PPWKPPVMKR…RAPRTTSHGA (85 aa)) is disordered. Basic and acidic residues predominate over residues 83 to 97 (SLKKTTLDATRDPRA).

In Mus musculus (Mouse), this protein is LEM domain-containing protein 1 (Lemd1).